A 293-amino-acid chain; its full sequence is Protein phosphatase 1 regulatory subunit 3B (293 aa).

The 109-residue stretch at 129–237 (RQRIENDHVC…NNQGKNYRII (109 aa)) folds into the CBM21 domain.

Interacts with glycogen, PPP1CC catalytic subunit of PP1 and PYGL. Associates with glycogen particles. Forms complexes with debranching enzyme, glycogen phosphorylase, glycogen synthase and phosphorylase kinase which is necessary for its regulation of PP1 activity.

In terms of biological role, acts as a glycogen-targeting subunit for phosphatase PP1. Facilitates interaction of the PP1 with enzymes of the glycogen metabolism and regulates its activity. Suppresses the rate at which PP1 dephosphorylates (inactivates) glycogen phosphorylase and enhances the rate at which it activates glycogen synthase and therefore limits glycogen breakdown. The protein is Protein phosphatase 1 regulatory subunit 3B (ppp1r3b) of Danio rerio (Zebrafish).